The chain runs to 457 residues: Siroheme synthase (457 aa).

The tract at residues 4–202 (LPIFCQLRDR…ANADEKAVNA (199 aa)) is precorrin-2 dehydrogenase /sirohydrochlorin ferrochelatase. Residues 22 to 23 (DV) and 43 to 44 (LT) contribute to the NAD(+) site. The residue at position 128 (S128) is a Phosphoserine. A uroporphyrinogen-III C-methyltransferase region spans residues 216-448 (GEVVLVGAGP…IIVGRVVALR (233 aa)). P225 is a binding site for S-adenosyl-L-methionine. D248 (proton acceptor) is an active-site residue. The Proton donor role is filled by K270. S-adenosyl-L-methionine-binding positions include 301–303 (GGD), I306, 331–332 (TA), M382, G411, and A437.

This sequence in the N-terminal section; belongs to the precorrin-2 dehydrogenase / sirohydrochlorin ferrochelatase family. The protein in the C-terminal section; belongs to the precorrin methyltransferase family. In terms of assembly, homodimer.

It carries out the reaction uroporphyrinogen III + 2 S-adenosyl-L-methionine = precorrin-2 + 2 S-adenosyl-L-homocysteine + H(+). The enzyme catalyses precorrin-2 + NAD(+) = sirohydrochlorin + NADH + 2 H(+). It catalyses the reaction siroheme + 2 H(+) = sirohydrochlorin + Fe(2+). It functions in the pathway cofactor biosynthesis; adenosylcobalamin biosynthesis; precorrin-2 from uroporphyrinogen III: step 1/1. The protein operates within cofactor biosynthesis; adenosylcobalamin biosynthesis; sirohydrochlorin from precorrin-2: step 1/1. Its pathway is porphyrin-containing compound metabolism; siroheme biosynthesis; precorrin-2 from uroporphyrinogen III: step 1/1. It participates in porphyrin-containing compound metabolism; siroheme biosynthesis; siroheme from sirohydrochlorin: step 1/1. It functions in the pathway porphyrin-containing compound metabolism; siroheme biosynthesis; sirohydrochlorin from precorrin-2: step 1/1. Multifunctional enzyme that catalyzes the SAM-dependent methylations of uroporphyrinogen III at position C-2 and C-7 to form precorrin-2 via precorrin-1. Then it catalyzes the NAD-dependent ring dehydrogenation of precorrin-2 to yield sirohydrochlorin. Finally, it catalyzes the ferrochelation of sirohydrochlorin to yield siroheme. The chain is Siroheme synthase from Salmonella typhimurium (strain LT2 / SGSC1412 / ATCC 700720).